Consider the following 847-residue polypeptide: Glucans biosynthesis glucosyltransferase H (847 aa).

Over 1–138 (MNKTTEYIDA…KWRTVGTIRR (138 aa)) the chain is Cytoplasmic. A helical transmembrane segment spans residues 139–156 (YILLILTLAQTVVATWYM). Topologically, residues 157–193 (KTILPYQGWALINPMDMVGQDVWVSFMQLLPYMLQTG) are periplasmic. Residues 194-216 (ILILFAVLFCWVSAGFWTALMGF) traverse the membrane as a helical segment. The Cytoplasmic portion of the chain corresponds to 217 to 511 (LQLLIGRDKY…LVKGMHPVHR (295 aa)). The helical transmembrane segment at 512-534 (AVFLTGVMSYLSAPLWFMFLALS) threads the bilayer. Topologically, residues 535–567 (TALQVVHALTEPQYFLQPRQLFPVWPQWRPELA) are periplasmic. Residues 568-590 (IALFASTMVLLFLPKLLSILLIW) form a helical membrane-spanning segment. The Cytoplasmic segment spans residues 591–602 (CKGTKEYGGFWR). The helical transmembrane segment at 603 to 625 (VTLSLLLEVLFSVLLAPVRMLFH) threads the bilayer. Residues 626–679 (TVFVVSAFLGWEVVWNSPQRDDDSTSWGEAFKRHGSQLLLGLVWAVGMAWLDLR) lie on the Periplasmic side of the membrane. A helical membrane pass occupies residues 680-702 (FLFWLAPIVFSLILSPFVSVISS). Residues 703–847 (RATVGLRTKR…ALRKPDAASQ (145 aa)) lie on the Cytoplasmic side of the membrane.

Belongs to the glycosyltransferase 2 family. OpgH subfamily.

The protein localises to the cell inner membrane. The protein operates within glycan metabolism; osmoregulated periplasmic glucan (OPG) biosynthesis. In terms of biological role, involved in the biosynthesis of osmoregulated periplasmic glucans (OPGs). In Escherichia coli O6:H1 (strain CFT073 / ATCC 700928 / UPEC), this protein is Glucans biosynthesis glucosyltransferase H.